Here is a 421-residue protein sequence, read N- to C-terminus: Osmoprotective compounds-binding protein GgtB (421 aa).

The first 18 residues, 1–18, serve as a signal peptide directing secretion; sequence MKFFKITTLIISLIVLTS. Cysteine 19 is lipidated: N-palmitoyl cysteine. A lipid anchor (S-diacylglycerol cysteine) is attached at cysteine 19.

This sequence belongs to the bacterial solute-binding protein 1 family. The complex is composed of two ATP-binding proteins (GgtA), two transmembrane proteins (GgtC and GgtD) and a solute-binding protein (GgtB).

The protein resides in the cell membrane. Its function is as follows. Part of the ABC transporter complex GgtABCD involved in the uptake of the osmoprotective compounds glucosylglycerol (GG), sucrose and trehalose. Binds glucosylglycerol and exhibits a somewhat lower affinity towards sucrose and a substantially lower affinity towards trehalose. In Synechocystis sp. (strain ATCC 27184 / PCC 6803 / Kazusa), this protein is Osmoprotective compounds-binding protein GgtB.